Here is a 312-residue protein sequence, read N- to C-terminus: Serine/threonine-protein kinase ppk11 (312 aa).

The Protein kinase domain occupies Y6–I258. ATP contacts are provided by residues I12–V20 and K35. D127 acts as the Proton acceptor in catalysis.

Belongs to the protein kinase superfamily. Ser/Thr protein kinase family.

It localises to the cytoplasm. The protein resides in the nucleus. The enzyme catalyses L-seryl-[protein] + ATP = O-phospho-L-seryl-[protein] + ADP + H(+). It carries out the reaction L-threonyl-[protein] + ATP = O-phospho-L-threonyl-[protein] + ADP + H(+). The chain is Serine/threonine-protein kinase ppk11 (ppk11) from Schizosaccharomyces pombe (strain 972 / ATCC 24843) (Fission yeast).